Reading from the N-terminus, the 108-residue chain is Small ribosomal subunit protein bS6 (108 aa).

This sequence belongs to the bacterial ribosomal protein bS6 family.

Binds together with bS18 to 16S ribosomal RNA. The sequence is that of Small ribosomal subunit protein bS6 from Dichelobacter nodosus (strain VCS1703A).